An 83-amino-acid chain; its full sequence is Small ribosomal subunit protein bS16 (83 aa).

Belongs to the bacterial ribosomal protein bS16 family.

This Shewanella denitrificans (strain OS217 / ATCC BAA-1090 / DSM 15013) protein is Small ribosomal subunit protein bS16.